Consider the following 875-residue polypeptide: Phosphoenolpyruvate carboxylase (875 aa).

Residues H137 and K542 contribute to the active site.

It belongs to the PEPCase type 1 family. The cofactor is Mg(2+).

It catalyses the reaction oxaloacetate + phosphate = phosphoenolpyruvate + hydrogencarbonate. In terms of biological role, forms oxaloacetate, a four-carbon dicarboxylic acid source for the tricarboxylic acid cycle. The polypeptide is Phosphoenolpyruvate carboxylase (Pseudomonas putida (strain GB-1)).